Consider the following 1135-residue polypeptide: Envelopment polyprotein (1135 aa).

The first 35 residues, 1–35 (MRILKLLELVVKVSLFTIALSSVLLAFLTFRATDA), serve as a signal peptide directing secretion. Residues 36 to 314 (KVEIIRGDHP…KYSKSIYKQT (279 aa)) lie on the Lumenal side of the membrane. The short motif at 41-43 (RGD) is the Cell attachment site element. Asparagine 116 carries an N-linked (GlcNAc...) asparagine; by host glycan. Cysteine 122 and cysteine 156 form a disulfide bridge. The tract at residues 177–195 (LDNKRHFSVGTNFFIPESL) is non-covalent dimerization. Asparagine 210 is a glycosylation site (N-linked (GlcNAc...) asparagine; by host). Cysteine 224 and cysteine 285 are oxidised to a cystine. Residues 315-366 (ACINFSWIRLILIALLIYFPIRWLVNKTTKPLFLWYDLMGLITYPVLLLINC) traverse the membrane as a helical segment. The Cytoplasmic portion of the chain corresponds to 367 to 484 (LWKYFPFKCS…VPGCPFLVTS (118 aa)). A signal for signal peptide peptidase region spans residues 437-484 (LSLSLLKFVTEILIGLVILSQIPMSMAQTTQCLSGCFYVPGCPFLVTS). The Lumenal segment spans residues 485–1067 (KFEKCPEKDQ…YFGSFFDTIR (583 aa)). N-linked (GlcNAc...) asparagine; by host glycosylation is found at asparagine 588, asparagine 605, and asparagine 980. The chain crosses the membrane as a helical span at residues 1068 to 1088 (VVLLIAFIFLVIYFCSILTSI). Topologically, residues 1089–1135 (CKGYVKHKSYKSRSKIEDDDEPEIKAPMLMKDTMTRRRPPMDFSHLV) are cytoplasmic.

This sequence belongs to the tospovirus envelope glycoprotein family. Homodimer; disulfide-linked. Heterodimer with Glycoprotein C. Interacts with nucleoprotein. As to quaternary structure, heterodimer with Glycoprotein N. Interacts with nucleoprotein. In terms of processing, specific enzymatic cleavages in vivo yield mature proteins including Glycoprotein N and Glycoprotein C. Glycosylated with O-linked glycans. Glycosylation is essential for proper subcellular location. Post-translationally, cleaved at acidic pH.

It is found in the virion membrane. Its subcellular location is the host Golgi apparatus membrane. The protein resides in the host endoplasmic reticulum membrane. In terms of biological role, forms the spikes present at the surface of the virion together with Glycoprotein C. They are able to attach the virion to a cell receptor and to promote fusion of membranes after endocytosis of the virion. Plays a role in virus binding and/or entry into the vector midgut. Functionally, forms the spikes present at the surface of the virion together with Glycoprotein N. They are able to attach the virion to a cell receptor and to promote fusion of membranes after endocytosis of the virion. Probable class II fusion protein. The sequence is that of Envelopment polyprotein (GP) from Frankliniella occidentalis (Western flower thrips).